Reading from the N-terminus, the 370-residue chain is Putative agmatine deiminase (370 aa).

The active-site Amidino-cysteine intermediate is the C361.

Belongs to the agmatine deiminase family.

It catalyses the reaction agmatine + H2O = N-carbamoylputrescine + NH4(+). This is Putative agmatine deiminase from Shewanella putrefaciens (strain CN-32 / ATCC BAA-453).